The primary structure comprises 1067 residues: Carbamoyl phosphate synthase large chain (1067 aa).

The carboxyphosphate synthetic domain stretch occupies residues methionine 1–glutamate 401. Positions 129, 169, 175, 176, 208, 210, 215, 241, 242, 243, 284, and 298 each coordinate ATP. The region spanning arginine 133–leucine 327 is the ATP-grasp 1 domain. Mg(2+) is bound by residues glutamine 284, glutamate 298, and asparagine 300. Mn(2+) contacts are provided by glutamine 284, glutamate 298, and asparagine 300. Residues isoleucine 402–valine 549 form an oligomerization domain region. Residues valine 550 to serine 932 are carbamoyl phosphate synthetic domain. The region spanning aspartate 674–leucine 864 is the ATP-grasp 2 domain. 10 residues coordinate ATP: arginine 710, lysine 749, leucine 751, glutamate 755, glycine 780, valine 781, histidine 782, serine 783, glutamine 823, and glutamate 835. Residues glutamine 823, glutamate 835, and asparagine 837 each contribute to the Mg(2+) site. Glutamine 823, glutamate 835, and asparagine 837 together coordinate Mn(2+). The MGS-like domain maps to methionine 933–isoleucine 1067. Residues methionine 933 to isoleucine 1067 form an allosteric domain region.

It belongs to the CarB family. Composed of two chains; the small (or glutamine) chain promotes the hydrolysis of glutamine to ammonia, which is used by the large (or ammonia) chain to synthesize carbamoyl phosphate. Tetramer of heterodimers (alpha,beta)4. Mg(2+) is required as a cofactor. Mn(2+) serves as cofactor.

It carries out the reaction hydrogencarbonate + L-glutamine + 2 ATP + H2O = carbamoyl phosphate + L-glutamate + 2 ADP + phosphate + 2 H(+). The catalysed reaction is hydrogencarbonate + NH4(+) + 2 ATP = carbamoyl phosphate + 2 ADP + phosphate + 2 H(+). The protein operates within amino-acid biosynthesis; L-arginine biosynthesis; carbamoyl phosphate from bicarbonate: step 1/1. It participates in pyrimidine metabolism; UMP biosynthesis via de novo pathway; (S)-dihydroorotate from bicarbonate: step 1/3. Large subunit of the glutamine-dependent carbamoyl phosphate synthetase (CPSase). CPSase catalyzes the formation of carbamoyl phosphate from the ammonia moiety of glutamine, carbonate, and phosphate donated by ATP, constituting the first step of 2 biosynthetic pathways, one leading to arginine and/or urea and the other to pyrimidine nucleotides. The large subunit (synthetase) binds the substrates ammonia (free or transferred from glutamine from the small subunit), hydrogencarbonate and ATP and carries out an ATP-coupled ligase reaction, activating hydrogencarbonate by forming carboxy phosphate which reacts with ammonia to form carbamoyl phosphate. The polypeptide is Carbamoyl phosphate synthase large chain (Clostridium perfringens (strain SM101 / Type A)).